The chain runs to 719 residues: MPRRKKKVKEVSESRNLEKKDVETTSSVSVKRKRRLEDAFIVISDSDGEEPKEENGLQKTKTKQSNRAKCLAKRKIAQMTEEEQFALALKMSEQEAREVNSQEEEEEELLRKAIAESLNSCRPSDASATRSRPLATGPSSQSHQEKTTDSGLTEGIWQLVPPSLFKGSHISQGNEAEEREEPWDHTEKTEEEPVSGSSGSWDQSSQPVFENVNVKSFDRCTGHSAEHTQCGKPQESTGRGSAFLKAVQGSGDTSRHCLPTLADAKGLQDTGGTVNYFWGIPFCPDGVDPNQYTKVILCQLEVYQKSLKMAQRQLLNKKGFGEPVLPRPPSLIQNECGQGEQASEKNECISEDMGDEDKEERQESRASDWHSKTKDFQESSIKSLKEKLLLEEEPTTSHGQSSQGIVEETSEEGNSVPASQSVAALTSKRSLVLMPESSAEEITVCPETQLSSSETFDLEREVSPGSRDILDGVRIIMADKEVGNKEDAEKEVAISTFSSSNQVSCPLCDQCFPPTKIERHAMYCNGLMEEDTVLTRRQKEAKTKSDSGTAAQTSLDIDKNEKCYLCKSLVPFREYQCHVDSCLQLAKADQGDGPEGSGRACSTVEGKWQQRLKNPKEKGHSEGRLLSFLEQSEHKTSDADIKSSETGAFRVPSPGMEEAGCSREMQSSFTRRDLNESPVKSFVSISEATDCLVDFKKQVTVQPGSRTRTKAGRGRRRKF.

Positions 1-30 (MPRRKKKVKEVSESRNLEKKDVETTSSVSV) are disordered. The interval 1 to 101 (MPRRKKKVKE…SEQEAREVNS (101 aa)) is necessary for transcriptional repression. Residues 9–23 (KEVSESRNLEKKDVE) show a composition bias toward basic and acidic residues. A Glycyl lysine isopeptide (Lys-Gly) (interchain with G-Cter in SUMO2) cross-link involves residue Lys-20. Ser-29 bears the Phosphoserine mark. Lys-31 participates in a covalent cross-link: Glycyl lysine isopeptide (Lys-Gly) (interchain with G-Cter in SUMO2). Residues 43–68 (ISDSDGEEPKEENGLQKTKTKQSNRA) form a disordered region. Ser-44 and Ser-46 each carry phosphoserine. The LR motif motif lies at 60-78 (TKTKQSNRAKCLAKRKIAQ). Residues Lys-75 and Lys-90 each participate in a glycyl lysine isopeptide (Lys-Gly) (interchain with G-Cter in SUMO2) cross-link. Positions 80–99 (TEEEQFALALKMSEQEAREV) constitute a UIM 1 domain. Disordered regions lie at residues 93-152 (EQEA…DSGL) and 164-205 (LFKG…DQSS). Residues 97-103 (REVNSQE) form a UIM-linker region. Residues 100–200 (NSQEEEEEEL…EEPVSGSSGS (101 aa)) form a necessary for interaction with NR6A1 N-terminus region. Ser-101 carries the phosphoserine modification. In terms of domain architecture, UIM 2 spans 105–124 (EEEELLRKAIAESLNSCRPS). The segment covering 117-130 (SLNSCRPSDASATR) has biased composition (polar residues). Residue Ser-140 is modified to Phosphoserine. Lys-188 participates in a covalent cross-link: Glycyl lysine isopeptide (Lys-Gly) (interchain with G-Cter in SUMO2). The segment covering 195–205 (SGSSGSWDQSS) has biased composition (low complexity). Ser-205 carries the post-translational modification Phosphoserine. Lys-245 participates in a covalent cross-link: Glycyl lysine isopeptide (Lys-Gly) (interchain with G-Cter in SUMO2). The segment at 270–400 (TGGTVNYFWG…EEEPTTSHGQ (131 aa)) is AIR. The disordered stretch occupies residues 320–378 (FGEPVLPRPPSLIQNECGQGEQASEKNECISEDMGDEDKEERQESRASDWHSKTKDFQE). Residues 349–358 (ISEDMGDEDK) are compositionally biased toward acidic residues. Positions 359–378 (EERQESRASDWHSKTKDFQE) are enriched in basic and acidic residues. At Ser-379 the chain carries Phosphoserine. Residues Lys-382 and Lys-387 each participate in a glycyl lysine isopeptide (Lys-Gly) (interchain with G-Cter in SUMO2) cross-link. The segment at 391-422 (EEEPTTSHGQSSQGIVEETSEEGNSVPASQSV) is disordered. A necessary for interaction with NR6A1 C-terminus region spans residues 400-500 (QSSQGIVEET…EVAISTFSSS (101 aa)). Residues Ser-402 and Ser-419 each carry the phosphoserine modification. The span at 412 to 422 (EGNSVPASQSV) shows a compositional bias: polar residues. Residue Lys-428 forms a Glycyl lysine isopeptide (Lys-Gly) (interchain with G-Cter in SUMO2) linkage. Ser-466 bears the Phosphoserine mark. A UBZ4-type zinc finger spans residues 502–529 (QVSCPLCDQCFPPTKIERHAMYCNGLME). Zn(2+) is bound by residues Cys-505, Cys-508, His-520, and Cys-524. A zinc-finger-like region region spans residues 505 to 582 (CPLCDQCFPP…REYQCHVDSC (78 aa)). Residues Lys-544, Lys-559, Lys-562, Lys-587, and Lys-607 each participate in a glycyl lysine isopeptide (Lys-Gly) (interchain with G-Cter in SUMO2) cross-link. Residues 588–668 (ADQGDGPEGS…AGCSREMQSS (81 aa)) are disordered. Over residues 614-623 (NPKEKGHSEG) the composition is skewed to basic and acidic residues. At Ser-627 the chain carries Phosphoserine. Basic and acidic residues predominate over residues 631–643 (QSEHKTSDADIKS). Glycyl lysine isopeptide (Lys-Gly) (interchain with G-Cter in SUMO2) cross-links involve residues Lys-635 and Lys-642. 2 positions are modified to phosphoserine: Ser-653 and Ser-677. Glycyl lysine isopeptide (Lys-Gly) (interchain with G-Cter in SUMO2) cross-links involve residues Lys-696 and Lys-697.

Belongs to the RAP80 family. As to quaternary structure, component of the ARISC complex, at least composed of UIMC1/RAP80, ABRAXAS1, BRCC3/BRCC36, BABAM2 and BABAM1/NBA1. Component of the BRCA1-A complex, at least composed of the BRCA1, BARD1, UIMC1/RAP80, ABRAXAS1, BRCC3/BRCC36, BABAM2 and BABAM1/NBA1. In the BRCA1-A complex, interacts directly with ABRAXAS1. Interacts with UBE2I. Interacts with NR6A1. Interacts with ESR1. Interacts with TSP57. Interacts with TRAIP. Sumoylated. In terms of processing, phosphorylated upon DNA damage by ATM or ATR. As to expression, expressed in testis, ovary, thymus and heart. Expressed in germ cells of the testis.

Its subcellular location is the nucleus. Its function is as follows. Ubiquitin-binding protein. Specifically recognizes and binds 'Lys-63'-linked ubiquitin. Plays a central role in the BRCA1-A complex by specifically binding 'Lys-63'-linked ubiquitinated histones H2A and H2AX at DNA lesions sites, leading to target the BRCA1-BARD1 heterodimer to sites of DNA damage at double-strand breaks (DSBs). The BRCA1-A complex also possesses deubiquitinase activity that specifically removes 'Lys-63'-linked ubiquitin on histones H2A and H2AX. Also weakly binds monoubiquitin but with much less affinity than 'Lys-63'-linked ubiquitin. May interact with monoubiquitinated histones H2A and H2B; the relevance of such results is however unclear in vivo. Does not bind Lys-48'-linked ubiquitin. May indirectly act as a transcriptional repressor by inhibiting the interaction of NR6A1 with the corepressor NCOR1. This is BRCA1-A complex subunit RAP80 (UIMC1) from Homo sapiens (Human).